The following is a 148-amino-acid chain: Wound-induced proteinase inhibitor 2 (148 aa).

The signal sequence occupies residues 1–25; sequence MAVHKEVNFVAYLLIVLGMFLYVDA. A 1; trypsin-inhibitory repeat occupies 26 to 81; that stretch reads KACTRECGNLGFGICPRSEGSPLNPICINCCSGYKGCNYYNSFGKFICEGESDPKR. 8 disulfides stabilise this stretch: cysteine 28–cysteine 116, cysteine 32–cysteine 112, cysteine 40–cysteine 122, cysteine 52–cysteine 89, cysteine 55–cysteine 73, cysteine 56–cysteine 85, cysteine 62–cysteine 98, and cysteine 115–cysteine 133. Residues 83–141 form a 2; chymotrypsin-inhibitory repeat; that stretch reads NACTFNCDPNIAYSRCPRSQGKSLIYPTGCTTCCTGYKGCYYFGKDGKFVCEGESDEPK.

This sequence belongs to the protease inhibitor I20 (potato type II proteinase inhibitor) family.

The protein localises to the secreted. Potent inhibitor of both trypsin and chymotrypsin. This chain is Wound-induced proteinase inhibitor 2, found in Solanum lycopersicum (Tomato).